We begin with the raw amino-acid sequence, 122 residues long: Large ribosomal subunit protein uL14 (122 aa).

It belongs to the universal ribosomal protein uL14 family. As to quaternary structure, part of the 50S ribosomal subunit. Forms a cluster with proteins L3 and L19. In the 70S ribosome, L14 and L19 interact and together make contacts with the 16S rRNA in bridges B5 and B8.

Binds to 23S rRNA. Forms part of two intersubunit bridges in the 70S ribosome. The chain is Large ribosomal subunit protein uL14 from Rickettsia massiliae (strain Mtu5).